Consider the following 104-residue polypeptide: Large ribosomal subunit protein uL24 (104 aa).

It belongs to the universal ribosomal protein uL24 family. As to quaternary structure, part of the 50S ribosomal subunit.

One of two assembly initiator proteins, it binds directly to the 5'-end of the 23S rRNA, where it nucleates assembly of the 50S subunit. Functionally, one of the proteins that surrounds the polypeptide exit tunnel on the outside of the subunit. The sequence is that of Large ribosomal subunit protein uL24 from Citrobacter koseri (strain ATCC BAA-895 / CDC 4225-83 / SGSC4696).